The sequence spans 403 residues: Decapping and exoribonuclease protein 1 (403 aa).

Residue E223 participates in a divalent metal cation binding. E260 is a binding site for substrate. D262, E273, and I274 together coordinate a divalent metal cation. K275 and Q297 together coordinate substrate.

This sequence belongs to the DXO/Dom3Z family. Requires a divalent metal cation as cofactor.

The protein localises to the cytoplasm. The enzyme catalyses a 5'-end NAD(+)-phospho-ribonucleoside in mRNA + H2O = a 5'-end phospho-ribonucleoside in mRNA + NAD(+) + H(+). The catalysed reaction is a 5'-end (N(7)-methyl 5'-triphosphoguanosine)-ribonucleoside-ribonucleotide in mRNA + H2O = a (N(7)-methyl 5'-triphosphoguanosine)-nucleoside + a 5'-end phospho-ribonucleoside in mRNA + H(+). Decapping enzyme for NAD-capped RNAs: specifically hydrolyzes the nicotinamide adenine dinucleotide (NAD) cap from a subset of RNAs by removing the entire NAD moiety from the 5'-end of an NAD-capped RNA. The NAD-cap is present at the 5'-end of some RNAs and snoRNAs. In contrast to the canonical 5'-end N7 methylguanosine (m7G) cap, the NAD cap promotes mRNA decay. Also acts as a non-canonical decapping enzyme that removes the entire cap structure of m7G capped or incompletely capped RNAs and mediates their subsequent degradation. Has decapping and 5'-3' exonuclease activities. Has decapping activity toward incomplete 5'-end cap mRNAs such as unmethylated 5'-end-capped RNA to release GpppN and 5'-end monophosphate RNA. The 5'-end monophosphate RNA is then degraded by the 5'-3' exoribonuclease activity, enabling this enzyme to decap and degrade incompletely capped mRNAs. The chain is Decapping and exoribonuclease protein 1 from Kluyveromyces lactis (strain ATCC 8585 / CBS 2359 / DSM 70799 / NBRC 1267 / NRRL Y-1140 / WM37) (Yeast).